We begin with the raw amino-acid sequence, 440 residues long: Rhamnogalacturonase A (440 aa).

An N-terminal signal peptide occupies residues 1–18 (MRALFLLALGSIPALVSG). The cysteines at positions 39 and 65 are disulfide-linked. Asparagine 50 carries an N-linked (GlcNAc...) asparagine glycan. Catalysis depends on aspartate 215, which acts as the Proton donor. A disulfide bridge connects residues cysteine 217 and cysteine 234. The active site involves histidine 290. Residue asparagine 317 is glycosylated (N-linked (GlcNAc...) asparagine). Cystine bridges form between cysteine 340/cysteine 346 and cysteine 368/cysteine 377. Threonine 385 carries an O-linked (Man) threonine glycan. The O-linked (Man) serine glycan is linked to serine 386. Residues threonine 388, threonine 389, and threonine 390 are each glycosylated (O-linked (Man) threonine). Serine 391 is a glycosylation site (O-linked (Man) serine). 2 O-linked (Man) threonine glycosylation sites follow: threonine 392 and threonine 394. 2 O-linked (Man) serine glycosylation sites follow: serine 398 and serine 401. Residues threonine 403, threonine 404, and threonine 416 are each glycosylated (O-linked (Man) threonine). Serine 418 is a glycosylation site (O-linked (Man) serine). 2 O-linked (Man) threonine glycosylation sites follow: threonine 423 and threonine 426. 2 O-linked (Man) serine glycosylation sites follow: serine 427 and serine 436.

The protein belongs to the glycosyl hydrolase 28 family. In terms of processing, the N-terminus is blocked. N-glycosylated and may also be O-glycosylated.

It localises to the secreted. The catalysed reaction is Endohydrolysis of alpha-D-GalA-(1-&gt;2)-alpha-L-Rha glycosidic bond in the rhamnogalacturonan I backbone with initial inversion of anomeric configuration releasing oligosaccharides with beta-D-GalA at the reducing end.. Its function is as follows. Pectinolytic enzymes consist of four classes of enzymes: pectine lyase, polygalacturonase, pectin methylesterase and rhamnogalacturonase. Has a positive effect in the apple hot-mash liquefaction process. Hydrolyzes alpha-D-galacturonopyranosyl-(1,2)-alpha-L-rhamnopyranosyl linkages in the backbone of the hairy regions of pectins. The protein is Rhamnogalacturonase A (rhgA) of Aspergillus aculeatus.